We begin with the raw amino-acid sequence, 115 residues long: Virion-associated protein (115 aa).

Coiled coils occupy residues 1–28 and 33–54; these read MAAT…MLER and KPTG…KIDQ. A compositionally biased stretch (polar residues) spans 96–106; that stretch reads GNEELGSSGNP. The interval 96–115 is disordered; it reads GNEELGSSGNPNAVKWPPRK.

This sequence belongs to the caulimovirus ORF III family. Homotetramer, through coiled-coil domain. Homotrimer when interacts with icosehadral capsid. Interacts with capsid protein, and with Movement protein.

It is found in the virion. It localises to the host cell junction. Its subcellular location is the host plasmodesma. Functionally, plays a role in virus cell-to-cell and plant-to-plant transmission. Interacts with virion icosahedral capsid and movement protein, thereby facilitating virion cell-to-cell transmission through plasmodesmata opened by viral movement protein. Also interacts with aphid transmission factor, attaching the virion to aphid stylet when the animal feeds on an virus infected plant. Aphid saliva may later detach the virion, inducing release of infectious particles when the animal feeds on a new plant. This is Virion-associated protein from Scrophularia californica (California bee plant).